Consider the following 312-residue polypeptide: tRNA uridine(34) hydroxylase (312 aa).

Positions 124 to 218 (SDPEVLLIDT…YLEEVPEQES (95 aa)) constitute a Rhodanese domain. The active-site Cysteine persulfide intermediate is cysteine 178. Residues 293-312 (AKARNQPHPIGRNYRLPSEA) are disordered.

Belongs to the TrhO family.

The catalysed reaction is uridine(34) in tRNA + AH2 + O2 = 5-hydroxyuridine(34) in tRNA + A + H2O. Functionally, catalyzes oxygen-dependent 5-hydroxyuridine (ho5U) modification at position 34 in tRNAs. The polypeptide is tRNA uridine(34) hydroxylase (Pseudomonas syringae pv. syringae (strain B728a)).